The primary structure comprises 124 residues: Multifunctional methyltransferase subunit TRM112 homolog B (124 aa).

Residues 2–120 enclose the TRM112 domain; it reads RLIVHNMLSC…SKGIPNMLLH (119 aa).

This sequence belongs to the TRM112 family. In terms of assembly, interacts with TRM9. As to expression, expressed in anthers.

Acts as an activator of both rRNA/tRNA and protein methyltransferases. Required for TRM9 tRNA methyltransferase activity. This chain is Multifunctional methyltransferase subunit TRM112 homolog B, found in Arabidopsis thaliana (Mouse-ear cress).